A 198-amino-acid polypeptide reads, in one-letter code: Molybdopterin synthase catalytic subunit (198 aa).

Residues 1–27 (MASQPPQEPTPTATSTPSTSALASLPP) show a composition bias toward low complexity. The tract at residues 1 to 40 (MASQPPQEPTPTATSTPSTSALASLPPHLDPTTYPRTLTS) is disordered. Substrate contacts are provided by residues 143 to 144 (HR), Lys-159, and 166 to 168 (KRE). Residues 176–198 (EWRENRERDAEGKVVAEKQEERE) are disordered.

Belongs to the MoaE family. MOCS2B subfamily. Heterotetramer; composed of 2 small (MOCS2A) and 2 large (MOCS2B) subunits.

Its subcellular location is the cytoplasm. The catalysed reaction is 2 [molybdopterin-synthase sulfur-carrier protein]-C-terminal-Gly-aminoethanethioate + cyclic pyranopterin phosphate + H2O = molybdopterin + 2 [molybdopterin-synthase sulfur-carrier protein]-C-terminal Gly-Gly + 2 H(+). Its pathway is cofactor biosynthesis; molybdopterin biosynthesis. In terms of biological role, catalytic subunit of the molybdopterin synthase complex, a complex that catalyzes the conversion of precursor Z into molybdopterin. Acts by mediating the incorporation of 2 sulfur atoms from thiocarboxylated MOCS2A into precursor Z to generate a dithiolene group. In Aspergillus clavatus (strain ATCC 1007 / CBS 513.65 / DSM 816 / NCTC 3887 / NRRL 1 / QM 1276 / 107), this protein is Molybdopterin synthase catalytic subunit.